A 141-amino-acid chain; its full sequence is Large ribosomal subunit protein uL16 (141 aa).

It belongs to the universal ribosomal protein uL16 family. Part of the 50S ribosomal subunit.

Binds 23S rRNA and is also seen to make contacts with the A and possibly P site tRNAs. This chain is Large ribosomal subunit protein uL16, found in Campylobacter concisus (strain 13826).